The primary structure comprises 262 residues: ATP synthase subunit a (262 aa).

6 consecutive transmembrane segments (helical) span residues 32-52 (IAFT…AVFV), 98-118 (LFMF…VLGI), 127-147 (FTIT…VGFW), 153-173 (FFSL…IFPI), 189-209 (LFVA…FVID), and 219-239 (LLVG…EILV).

This sequence belongs to the ATPase A chain family. As to quaternary structure, F-type ATPases have 2 components, CF(1) - the catalytic core - and CF(0) - the membrane proton channel. CF(1) has five subunits: alpha(3), beta(3), gamma(1), delta(1), epsilon(1). CF(0) has four main subunits: a, b, b' and c.

It is found in the cell inner membrane. In terms of biological role, key component of the proton channel; it plays a direct role in the translocation of protons across the membrane. The polypeptide is ATP synthase subunit a (Erythrobacter litoralis (strain HTCC2594)).